The primary structure comprises 634 residues: Pescadillo homolog (634 aa).

In terms of domain architecture, BRCT spans 321–414 (RLRTLFKGLK…QLLPTNKYFM (94 aa)). 3 disordered regions span residues 437-473 (EEKALHDPSLIETHVQSDDDDDDSDAEADNQEEEEIE), 491-561 (EYKK…RKAE), and 603-634 (NIDADAKEAKKTAKREAKKAAAEAAAKALKMA). S453 is subject to Phosphoserine. 2 stretches are compositionally biased toward acidic residues: residues 454-473 (DDDDDDSDAEADNQEEEEIE) and 501-527 (VNEDEEDSVDDDDEEDEEEEEEEDVEQ). Coiled coils occupy residues 460–546 (SDAE…KVES) and 596–629 (LLRKKRRNIDADAKEAKKTAKREAKKAAAEAAAK). Composition is skewed to basic and acidic residues over residues 528 to 548 (LDDKTKRLLEEKQKMKVESGK) and 603 to 623 (NIDADAKEAKKTAKREAKKAA). A compositionally biased stretch (low complexity) spans 624–634 (AEAAAKALKMA).

Belongs to the pescadillo family.

The protein localises to the nucleus. Its subcellular location is the nucleolus. The protein resides in the nucleoplasm. Required for maturation of ribosomal RNAs and formation of the large ribosomal subunit. The protein is Pescadillo homolog of Drosophila willistoni (Fruit fly).